A 146-amino-acid polypeptide reads, in one-letter code: Phospholipase A2, membrane associated (146 aa).

The signal sequence occupies residues 1–21; that stretch reads MKVLLLLAASIMAFGSIQVQG. 7 disulfides stabilise this stretch: Cys47–Cys139, Cys49–Cys65, Cys64–Cys119, Cys70–Cys146, Cys71–Cys112, Cys80–Cys105, and Cys98–Cys110. Ca(2+) contacts are provided by His48, Gly50, and Gly52. The active site involves His68. Asp69 serves as a coordination point for Ca(2+). The active site involves Asp113.

Belongs to the phospholipase A2 family. The cofactor is Ca(2+). Mainly in the Paneth cells adjacent to the stem population in the small intestines.

The protein resides in the secreted. The protein localises to the cell membrane. It is found in the mitochondrion outer membrane. It catalyses the reaction a 1,2-diacyl-sn-glycero-3-phosphoethanolamine + H2O = a 1-acyl-sn-glycero-3-phosphoethanolamine + a fatty acid + H(+). The catalysed reaction is 1-hexadecanoyl-2-(9Z-octadecenoyl)-sn-glycero-3-phosphoethanolamine + H2O = 1-hexadecanoyl-sn-glycero-3-phosphoethanolamine + (9Z)-octadecenoate + H(+). The enzyme catalyses 1-hexadecanoyl-2-(9Z,12Z-octadecadienoyl)-sn-glycero-3-phosphoethanolamine + H2O = 1-hexadecanoyl-sn-glycero-3-phosphoethanolamine + (9Z,12Z)-octadecadienoate + H(+). It carries out the reaction 1-hexadecanoyl-2-(5Z,8Z,11Z,14Z-eicosatetraenoyl)-sn-glycero-3-phosphoethanolamine + H2O = 1-hexadecanoyl-sn-glycero-3-phosphoethanolamine + (5Z,8Z,11Z,14Z)-eicosatetraenoate + H(+). It catalyses the reaction N-hexadecanoyl-1,2-di-(9Z-octadecenoyl)-sn-glycero-3-phosphoethanolamine + H2O = N-hexadecanoyl-1-(9Z-octadecenoyl)-sn-glycero-3-phosphoethanolamine + (9Z)-octadecenoate + H(+). The catalysed reaction is 1,2-dihexadecanoyl-sn-glycero-3-phospho-(1'-sn-glycerol) + H2O = 1-hexadecanoyl-sn-glycero-3-phospho-(1'-sn-glycerol) + hexadecanoate + H(+). The enzyme catalyses 1-hexadecanoyl-2-(9Z-octadecenoyl)-sn-glycero-3-phosphoglycerol + H2O = 1-hexadecanoyl-sn-glycero-3-phosphoglycerol + (9Z)-octadecenoate + H(+). It carries out the reaction 1-hexadecanoyl-2-(9Z-octadecenoyl)-sn-glycero-3-phospho-(1'-sn-glycerol) + H2O = 1-hexadecanoyl-sn-glycero-3-phospho-(1'-sn-glycerol) + (9Z)-octadecenoate + H(+). It catalyses the reaction a 1,2-diacyl-sn-glycero-3-phosphocholine + H2O = a 1-acyl-sn-glycero-3-phosphocholine + a fatty acid + H(+). The catalysed reaction is 1,2-dihexadecanoyl-sn-glycero-3-phosphocholine + H2O = 1-hexadecanoyl-sn-glycero-3-phosphocholine + hexadecanoate + H(+). The enzyme catalyses 1-hexadecanoyl-2-(9Z-octadecenoyl)-sn-glycero-3-phosphocholine + H2O = 1-hexadecanoyl-sn-glycero-3-phosphocholine + (9Z)-octadecenoate + H(+). It carries out the reaction 1-hexadecanoyl-2-(9Z,12Z-octadecadienoyl)-sn-glycero-3-phosphocholine + H2O = (9Z,12Z)-octadecadienoate + 1-hexadecanoyl-sn-glycero-3-phosphocholine + H(+). It catalyses the reaction 1-hexadecanoyl-2-(4Z,7Z,10Z,13Z,16Z,19Z-docosahexaenoyl)-sn-glycero-3-phosphocholine + H2O = (4Z,7Z,10Z,13Z,16Z,19Z)-docosahexaenoate + 1-hexadecanoyl-sn-glycero-3-phosphocholine + H(+). Its function is as follows. Secretory calcium-dependent phospholipase A2 that primarily targets extracellular phospholipids with implications in host antimicrobial defense, inflammatory response and tissue regeneration. Hydrolyzes the ester bond of the fatty acyl group attached at sn-2 position of phospholipids (phospholipase A2 activity) with preference for phosphatidylethanolamines and phosphatidylglycerols over phosphatidylcholines. Contributes to lipid remodeling of cellular membranes and generation of lipid mediators involved in pathogen clearance. Displays bactericidal activity against Gram-positive bacteria by directly hydrolyzing phospholipids of the bacterial membrane. Upon sterile inflammation, targets membrane phospholipids of extracellular mitochondria released from activated platelets, generating free unsaturated fatty acids such as arachidonate that is used by neighboring leukocytes to synthesize inflammatory eicosanoids such as leukotrienes. Simultaneously, by compromising mitochondrial membrane integrity, promotes the release in circulation of potent damage-associated molecular pattern molecules that activate the innate immune response. Plays a stem cell regulator role in the intestinal crypt. Within intracellular compartment mediates Paneth cell differentiation and its stem cell supporting functions by inhibiting Wnt signaling pathway in intestinal stem cell (ICS). Secreted in the intestinal lumen upon inflammation, acts in an autocrine way and promotes prostaglandin E2 synthesis that stimulates Wnt signaling pathway in ICS cells and tissue regeneration. May play a role in the biosynthesis of N-acyl ethanolamines that regulate energy metabolism and inflammation. Hydrolyzes N-acyl phosphatidylethanolamines to N-acyl lysophosphatidylethanolamines, which are further cleaved by a lysophospholipase D to release N-acyl ethanolamines. Independent of its catalytic activity, acts as a ligand for integrins. Binds to and activates integrins ITGAV:ITGB3, ITGA4:ITGB1 and ITGA5:ITGB1. Binds to a site (site 2) which is distinct from the classical ligand-binding site (site 1) and induces integrin conformational changes and enhanced ligand binding to site 1. Induces cell proliferation in an integrin-dependent manner. This chain is Phospholipase A2, membrane associated (Pla2g2a), found in Mus musculus (Mouse).